Here is a 951-residue protein sequence, read N- to C-terminus: Translation initiation factor IF-2 (951 aa).

2 disordered regions span residues 58–255 (AERK…AVVI) and 305–329 (DVSRDKRRGRQPGRPISEEQAKSLS). Over residues 101–170 (AEPQYAEPQQ…PQAQPAQPAA (70 aa)) the composition is skewed to low complexity. Pro residues predominate over residues 171-216 (PVAPPAPSAQPSAPQPPAAQPRPPQPPMPSRPPPAGYRPAPPPGAR). The segment covering 217–234 (PPMSAAPGAPAQPGAAGQ) has biased composition (low complexity). The region spanning 450–619 (IRPPVVTVMG…ALQSEVLELK (170 aa)) is the tr-type G domain. The G1 stretch occupies residues 459 to 466 (GHVDHGKT). GTP is bound at residue 459–466 (GHVDHGKT). Residues 484 to 488 (GITQH) form a G2 region. The interval 505–508 (DTPG) is G3. Residues 505–509 (DTPGH) and 559–562 (NKVD) each bind GTP. Residues 559 to 562 (NKVD) form a G4 region. The G5 stretch occupies residues 595-597 (SAR).

Belongs to the TRAFAC class translation factor GTPase superfamily. Classic translation factor GTPase family. IF-2 subfamily.

Its subcellular location is the cytoplasm. One of the essential components for the initiation of protein synthesis. Protects formylmethionyl-tRNA from spontaneous hydrolysis and promotes its binding to the 30S ribosomal subunits. Also involved in the hydrolysis of GTP during the formation of the 70S ribosomal complex. In Anaeromyxobacter dehalogenans (strain 2CP-1 / ATCC BAA-258), this protein is Translation initiation factor IF-2.